The primary structure comprises 858 residues: Low-density lipoprotein receptor-related protein 12 (858 aa).

An N-terminal signal peptide occupies residues 1 to 32 (MARRWSTKESQRRGSAWLLLFLAGVYGNGALA). Residues 33–492 (ELSENVHISG…ENCPVIVPTR (460 aa)) are Extracellular-facing. Cystine bridges form between cysteine 47–cysteine 76, cysteine 103–cysteine 122, cysteine 166–cysteine 178, cysteine 173–cysteine 191, cysteine 185–cysteine 200, cysteine 215–cysteine 232, cysteine 222–cysteine 245, cysteine 239–cysteine 254, and cysteine 259–cysteine 285. Residues 47–159 (CGESPEQIRA…KGFRLAYFSG (113 aa)) enclose the CUB 1 domain. An N-linked (GlcNAc...) asparagine glycan is attached at asparagine 75. 2 consecutive LDL-receptor class A domains span residues 165 to 201 (DCACDQFRCGNGKCIPEAWKCNSMDECGDSSDEEVCA) and 214 to 255 (PCAY…IDCD). The CUB 2 domain maps to 259–372 (CGQWLKYFYG…RGFNATYQVD (114 aa)). 2 N-linked (GlcNAc...) asparagine glycosylation sites follow: asparagine 284 and asparagine 366. LDL-receptor class A domains lie at 374-411 (FCLPWEIPCGGNWGCYTEQQRCDGYWHCPNGRDEINCT), 412-449 (MCQKEEFPCSRNGVCYPRSDRCNYQNHCPNGSDEKNCF), and 450-486 (FCQPGNFHCKNNRCVFESWVCDSQDDCGDGSDEENCP). 9 disulfide bridges follow: cysteine 375–cysteine 388, cysteine 382–cysteine 401, cysteine 395–cysteine 410, cysteine 413–cysteine 426, cysteine 420–cysteine 439, cysteine 433–cysteine 448, cysteine 451–cysteine 463, cysteine 458–cysteine 476, and cysteine 470–cysteine 485. A glycan (N-linked (GlcNAc...) asparagine) is linked at asparagine 409. Residue asparagine 441 is glycosylated (N-linked (GlcNAc...) asparagine). The chain crosses the membrane as a helical span at residues 493–513 (VITAAVIGSLICGLLLVIALG). Topologically, residues 514-858 (CTCKLYSLRM…TSDDEALLLC (345 aa)) are cytoplasmic. Disordered stretches follow at residues 619-721 (ALVS…VSPA) and 746-767 (SSSTTQNRSPLRQLDTAVSGRE). The segment covering 712-721 (SVEAPSVSPA) has biased composition (low complexity). Polar residues predominate over residues 746-755 (SSSTTQNRSP).

This sequence belongs to the LDLR family. In terms of assembly, may interact with RACK1, ZFYVE9 and NMRK2.

Its subcellular location is the membrane. The protein resides in the coated pit. Its function is as follows. Probable receptor, which may be involved in the internalization of lipophilic molecules and/or signal transduction. May act as a tumor suppressor. In Mus musculus (Mouse), this protein is Low-density lipoprotein receptor-related protein 12 (Lrp12).